The sequence spans 476 residues: Zinc finger protein 563 (476 aa).

One can recognise a KRAB domain in the interval 4-96 (VAFEDVAVNF…IRDSIVNNSI (93 aa)). A C2H2-type 1; degenerate zinc finger spans residues 101–125 (DPCQSAECEEVIMGHLSLNSHIRVD). The C2H2-type 2; degenerate zinc-finger motif lies at 169–191 (YECKECGKTFSSRRNLRRHMVVQ). C2H2-type zinc fingers lie at residues 197-219 (YKCK…ERTH), 225-247 (YECK…ERMH), 253-275 (YECK…ERTH), 281-303 (YTCK…ETTH), 309-331 (YECK…MKRH), 337-359 (HKCK…ERIH), 365-387 (YECK…MIMH), 393-415 (HKCK…EKSH), 421-443 (YECK…MVMH), and 449-471 (NKCK…EKTH).

The protein belongs to the krueppel C2H2-type zinc-finger protein family.

Its subcellular location is the nucleus. In terms of biological role, may be involved in transcriptional regulation. The protein is Zinc finger protein 563 (ZNF563) of Homo sapiens (Human).